Here is a 365-residue protein sequence, read N- to C-terminus: MFQTSRSQLLYLSALGVWGLWGYAYFNGMFTRLDTITRTLHFPDNRPLRDSYTGLGPLDKQLTLLSVFYDVLTNSLSSGPRLLFFDINYAVACTNLWTLIESRRRGVRSWFLKYPAWAMVLCNANGAAIVLPIYLYCVCRSKARLRDPVVPLHEAVALPIITVVMLLQPLLIFAPAWFGYSGSETHHALIALFQVAPVIVLGLYVGITSLLSYHFPATSLSSKEYKKWISASLILAGSVASAVHIYTLTGALFTRDSDVSLTRLFVPTGGFTDPIKTLVSNENLLAEYAALLENLHLFSQWDWIVVCLTSVVYAQLLLSRREGLKVNKPAVPYEAQEMIYLTIATVVLGPGGAGSFALAIREARI.

The next 8 membrane-spanning stretches (helical) occupy residues 10-30, 82-102, 116-136, 158-178, 188-208, 233-253, 297-317, and 338-358; these read LYLS…NGMF, LLFF…LIES, AWAM…IYLY, LPII…PAWF, ALIA…VGIT, LILA…GALF, LFSQ…AQLL, and MIYL…SFAL.

This sequence belongs to the membrane-bound ascI terpene cyclase family.

It is found in the membrane. It participates in polyketide biosynthesis. Part of the gene cluster that mediates the biosynthesis of depudecin, a highly oxidized eleven-carbon linear polyketide that acts as a histone deacetylase (HDAC) inhibitor and makes a small contribution to pathogenesis. The reducing polyketide synthase DEP5 is the central enzyme in depudecin biosynthesis by yielding the backbone polyketide chain. The monooxygenases DEP2 and DEP4, as well as the uncharacterized protein DEP1, then act as tailoring enzymes to modify the intermediate polyketide chain into depudecin. This is Terpene cyclase DEP1 from Fusarium langsethiae.